Consider the following 625-residue polypeptide: MSITQKVRNWVEEFDVIVARSAFGRWFRLEGCGHPRERKGSRFSLEISAGLTTFFAMAYILAVNATILVDTGGTCECTEANRDDCDKLDDYVLCKEDFHRDLVTATAAISALASFCMGLFANMPVGMAPGMGLNAYFAYQVVGYNGTGRVSYREALLAVFVEGFIFTGLTVIGLRQWLARVIPASLKFATGAGIGLYLTIIGLSPSAGLGVIGHSSSDIVALGGCPPEYLNADYSCNGHQLQSGRMWVGIFCGGVLTAILMMYKFKGAVLAGIALVTITSWPRRSLVTMFPHTLTGDYNFDFFKKVVSFRKINRILVAQQWNVTGGQFAIALITFLYVDIMDMTGTLYSMANYAGLVDPRTQDFEGSAVAYIVDALSISIGSLFGCSPVTAFIESGSGISAGGRTGILGMVVGICFFISLFFAPIFSSIPVWATGSTLVLVGSMMMKSTTLINWSYLGDSIPAFITIALMPFTYSIAYGLIAGIICYALLNSIIYAIDKMSRGRLVPADYNQKEAWTWRVEGGLLPQWVRRLFKGNRRFWEDPDDRKAMDNATLEMATSRSYSEDGKNEKTTHEDVTMKETSLKKMDDERISVDEAVGESESFSNRQQDFRTPYAGIDMDTDDRI.

The next 10 helical transmembrane spans lie at 49-69 (AGLT…TILV), 107-127 (AAIS…PVGM), 154-174 (EALL…VIGL), 192-212 (AGIG…LGVI), 246-263 (MWVG…LMMY), 328-348 (FAIA…GTLY), 369-389 (VAYI…CSPV), 406-426 (GILG…APIF), 429-449 (IPVW…MKST), and 465-485 (ITIA…AGII). Residues 595-625 (EAVGESESFSNRQQDFRTPYAGIDMDTDDRI) form a disordered region.

It belongs to the nucleobase:cation symporter-2 (NCS2) (TC 2.A.40) family. Azg-like subfamily.

It localises to the golgi apparatus membrane. This Schizosaccharomyces pombe (strain 972 / ATCC 24843) (Fission yeast) protein is Putative xanthine/uracil permease C887.17.